A 191-amino-acid chain; its full sequence is Probable nicotinate-nucleotide adenylyltransferase (191 aa).

The protein belongs to the NadD family.

It catalyses the reaction nicotinate beta-D-ribonucleotide + ATP + H(+) = deamido-NAD(+) + diphosphate. Its pathway is cofactor biosynthesis; NAD(+) biosynthesis; deamido-NAD(+) from nicotinate D-ribonucleotide: step 1/1. Its function is as follows. Catalyzes the reversible adenylation of nicotinate mononucleotide (NaMN) to nicotinic acid adenine dinucleotide (NaAD). The sequence is that of Probable nicotinate-nucleotide adenylyltransferase from Staphylococcus epidermidis (strain ATCC 12228 / FDA PCI 1200).